A 90-amino-acid chain; its full sequence is Cluster 41 protein AFLA_114800 (90 aa).

Residues 55-77 (GLLLLCCFYPIGNLILLVRLSLV) traverse the membrane as a helical segment. The N-linked (GlcNAc...) asparagine glycan is linked to N80.

Its subcellular location is the membrane. In terms of biological role, cluster 41 protein; part of the gene cluster 41 that mediates the biosynthesis of an extracellular and diffusible metabolite that is able to stimulate colony sclerotial production. This Aspergillus flavus (strain ATCC 200026 / FGSC A1120 / IAM 13836 / NRRL 3357 / JCM 12722 / SRRC 167) protein is Cluster 41 protein AFLA_114800.